Reading from the N-terminus, the 373-residue chain is Beta sliding clamp (373 aa).

It belongs to the beta sliding clamp family. As to quaternary structure, forms a ring-shaped head-to-tail homodimer around DNA which binds and tethers DNA polymerases and other proteins to the DNA. The DNA replisome complex has a single clamp-loading complex (3 tau and 1 each of delta, delta', psi and chi subunits) which binds 3 Pol III cores (1 core on the leading strand and 2 on the lagging strand) each with a beta sliding clamp dimer. Additional proteins in the replisome are other copies of gamma, psi and chi, Ssb, DNA helicase and RNA primase.

The protein localises to the cytoplasm. Functionally, confers DNA tethering and processivity to DNA polymerases and other proteins. Acts as a clamp, forming a ring around DNA (a reaction catalyzed by the clamp-loading complex) which diffuses in an ATP-independent manner freely and bidirectionally along dsDNA. Initially characterized for its ability to contact the catalytic subunit of DNA polymerase III (Pol III), a complex, multichain enzyme responsible for most of the replicative synthesis in bacteria; Pol III exhibits 3'-5' exonuclease proofreading activity. The beta chain is required for initiation of replication as well as for processivity of DNA replication. The polypeptide is Beta sliding clamp (dnaN) (Mycoplasmopsis pulmonis (strain UAB CTIP) (Mycoplasma pulmonis)).